Here is a 271-residue protein sequence, read N- to C-terminus: Ribosomal RNA small subunit methyltransferase A (271 aa).

S-adenosyl-L-methionine is bound by residues histidine 11, leucine 13, glycine 38, glutamate 58, aspartate 86, and asparagine 101.

It belongs to the class I-like SAM-binding methyltransferase superfamily. rRNA adenine N(6)-methyltransferase family. RsmA subfamily.

The protein resides in the cytoplasm. It carries out the reaction adenosine(1518)/adenosine(1519) in 16S rRNA + 4 S-adenosyl-L-methionine = N(6)-dimethyladenosine(1518)/N(6)-dimethyladenosine(1519) in 16S rRNA + 4 S-adenosyl-L-homocysteine + 4 H(+). Its function is as follows. Specifically dimethylates two adjacent adenosines (A1518 and A1519) in the loop of a conserved hairpin near the 3'-end of 16S rRNA in the 30S particle. May play a critical role in biogenesis of 30S subunits. The sequence is that of Ribosomal RNA small subunit methyltransferase A from Helicobacter acinonychis (strain Sheeba).